Reading from the N-terminus, the 85-residue chain is uncharacterized protein (85 aa).

An N-terminal signal peptide occupies residues 1-20; the sequence is MIKLFCVLAAFISINSACQS.

This is an uncharacterized protein from Invertebrate iridescent virus 6 (IIV-6).